A 459-amino-acid polypeptide reads, in one-letter code: Cysteine--tRNA ligase (459 aa).

Cys28 is a binding site for Zn(2+). Residues 30–40 (VTIYDLCHIGH) carry the 'HIGH' region motif. Residues Cys209, His234, and Glu238 each coordinate Zn(2+). The short motif at 266–270 (KMSKS) is the 'KMSKS' region element. Lys269 is a binding site for ATP.

It belongs to the class-I aminoacyl-tRNA synthetase family. In terms of assembly, monomer. Requires Zn(2+) as cofactor.

Its subcellular location is the cytoplasm. It catalyses the reaction tRNA(Cys) + L-cysteine + ATP = L-cysteinyl-tRNA(Cys) + AMP + diphosphate. The protein is Cysteine--tRNA ligase of Shewanella baltica (strain OS185).